The sequence spans 26 residues: Dermaseptin-B5 (26 aa).

Residue Val-26 is modified to Valine amide.

Belongs to the frog skin active peptide (FSAP) family. Dermaseptin subfamily. In terms of tissue distribution, expressed by the skin glands.

Its subcellular location is the secreted. Possesses a potent antimicrobial activity against Gram-positive and Gram-negative bacteria. Probably acts by disturbing membrane functions with its amphipathic structure. The chain is Dermaseptin-B5 from Phyllomedusa bicolor (Two-colored leaf frog).